Consider the following 711-residue polypeptide: Polyribonucleotide nucleotidyltransferase (711 aa).

Residues D486 and D492 each contribute to the Mg(2+) site. In terms of domain architecture, KH spans 553–612; sequence PRIHTIKINPDKIKDVIGKGGSVIRALTEETGTTIEIEDDGTVKIAATDGDKAQHAIRRI. An S1 motif domain is found at 622–690; sequence GRIYNGKVTR…RQGRVRLSIK (69 aa). The tract at residues 691-711 is disordered; that stretch reads EATEQTPSAAAPEAPVAEQGE. Residues 699–711 are compositionally biased toward low complexity; the sequence is AAAPEAPVAEQGE.

It belongs to the polyribonucleotide nucleotidyltransferase family. As to quaternary structure, component of the RNA degradosome, which is a multiprotein complex involved in RNA processing and mRNA degradation. Mg(2+) is required as a cofactor.

It localises to the cytoplasm. It catalyses the reaction RNA(n+1) + phosphate = RNA(n) + a ribonucleoside 5'-diphosphate. In terms of biological role, involved in mRNA degradation. Catalyzes the phosphorolysis of single-stranded polyribonucleotides processively in the 3'- to 5'-direction. This is Polyribonucleotide nucleotidyltransferase from Klebsiella pneumoniae (strain 342).